A 220-amino-acid chain; its full sequence is NADH-quinone oxidoreductase subunit I (220 aa).

2 consecutive 4Fe-4S ferredoxin-type domains span residues 71–102 and 112–141; these read LQRLLDSGSERCIGCGLCEKICTSNCIRIITH and DSYTINLGRCIYCGLCAEVCPELAIVMGNR. 8 residues coordinate [4Fe-4S] cluster: cysteine 82, cysteine 85, cysteine 88, cysteine 92, cysteine 121, cysteine 124, cysteine 127, and cysteine 131. Residues 187–220 are disordered; that stretch reads MQATPLDYVQEPSKEESKEETPTRSESHKGDENV. A compositionally biased stretch (basic and acidic residues) spans 198-220; it reads PSKEESKEETPTRSESHKGDENV.

Belongs to the complex I 23 kDa subunit family. As to quaternary structure, NDH-1 is composed of 14 different subunits. Subunits NuoA, H, J, K, L, M, N constitute the membrane sector of the complex. It depends on [4Fe-4S] cluster as a cofactor.

It is found in the cell inner membrane. The catalysed reaction is a quinone + NADH + 5 H(+)(in) = a quinol + NAD(+) + 4 H(+)(out). Functionally, NDH-1 shuttles electrons from NADH, via FMN and iron-sulfur (Fe-S) centers, to quinones in the respiratory chain. The immediate electron acceptor for the enzyme in this species is believed to be ubiquinone. Couples the redox reaction to proton translocation (for every two electrons transferred, four hydrogen ions are translocated across the cytoplasmic membrane), and thus conserves the redox energy in a proton gradient. In Helicobacter pylori (strain G27), this protein is NADH-quinone oxidoreductase subunit I.